Reading from the N-terminus, the 170-residue chain is Large ribosomal subunit protein uL10 (170 aa).

The protein belongs to the universal ribosomal protein uL10 family. In terms of assembly, part of the ribosomal stalk of the 50S ribosomal subunit. The N-terminus interacts with L11 and the large rRNA to form the base of the stalk. The C-terminus forms an elongated spine to which L12 dimers bind in a sequential fashion forming a multimeric L10(L12)X complex.

Its function is as follows. Forms part of the ribosomal stalk, playing a central role in the interaction of the ribosome with GTP-bound translation factors. This Nitratiruptor sp. (strain SB155-2) protein is Large ribosomal subunit protein uL10.